A 65-amino-acid polypeptide reads, in one-letter code: Large ribosomal subunit protein bL35 (65 aa).

The protein belongs to the bacterial ribosomal protein bL35 family.

In Yersinia pseudotuberculosis serotype O:1b (strain IP 31758), this protein is Large ribosomal subunit protein bL35.